We begin with the raw amino-acid sequence, 169 residues long: Large ribosomal subunit protein uL15 (169 aa).

A disordered region spans residues 20-56 (GRGIGSGKGKTGGRGVKGQKARSGVSIKGFEGGQMPL). Over residues 21 to 35 (RGIGSGKGKTGGRGV) the composition is skewed to gly residues.

The protein belongs to the universal ribosomal protein uL15 family. Part of the 50S ribosomal subunit.

In terms of biological role, binds to the 23S rRNA. The chain is Large ribosomal subunit protein uL15 from Methylorubrum extorquens (strain CM4 / NCIMB 13688) (Methylobacterium extorquens).